We begin with the raw amino-acid sequence, 590 residues long: DNA mismatch repair protein MutL (590 aa).

Belongs to the DNA mismatch repair MutL/HexB family.

This protein is involved in the repair of mismatches in DNA. It is required for dam-dependent methyl-directed DNA mismatch repair. May act as a 'molecular matchmaker', a protein that promotes the formation of a stable complex between two or more DNA-binding proteins in an ATP-dependent manner without itself being part of a final effector complex. The polypeptide is DNA mismatch repair protein MutL (Caldanaerobacter subterraneus subsp. tengcongensis (strain DSM 15242 / JCM 11007 / NBRC 100824 / MB4) (Thermoanaerobacter tengcongensis)).